Reading from the N-terminus, the 374-residue chain is MEKFRNAFIEFYELSKKYLENSTGQKVYEVNYDNDIDSFLTVFPILESKIGGDINCAMSDETVILAMQQVEFKMFTFWYMRSAANVKSMLNKITDKETKEQFIRIFKDMLVYAKVITSINNMYSNMKKDTNEIVQDLKKILGIVSLIKSANNEHQAYKILMENNSFIIRTINKVLADSNYIIKIIALFNTDVVSDKIKLEEYKDVFSFSKENVIFGIKCFCDITIDGIDQINNKYVSFFKKVLPNIILFQTSCVKTTQFVNIFSKLSSIVYSEILTNERLHVLFSEIMASFKTKVSVEDLKKRKVNNIQGLISEISNNREMYKNIFVEEYEKHKTTLISIVQCITDNYNINYKENAVDIEFIFDFIQEHYISKL.

This sequence belongs to the chordopoxvirinae A6 family.

The protein resides in the virion. Functionally, plays an essential role in immature virion (IV) to mature virion (MV) transition. The polypeptide is Protein A6 homolog (Vertebrata (FPV)).